Reading from the N-terminus, the 552-residue chain is MDIKRTVLWVIFFMSAVMLFDNWQRDHGRPSMFFPSATPTRTVGSAAPGTTTPGTQPADLPATNAAAPGNAPAATQSQLIKFNTDVYSGEIDTRGGTLSKLSLVKQGDGKQPDLVITLFDRTANHTYLARTGLLGGDFPNHNDIYTPLPNQPHDLTGDEKSFQISFESPVKGGVKVIKTYTFTRGSYVIGVDTKIQNVGTTPVSPSVYMELVRDDQPVETPRFSHTFIGPAVYTDQHHFQKMTFGDIDKNKQDYATSADNGWIAMVQHYFASAWIPQQGAKRDIYVEKIDPALYRVGVKEPVPTIAPGQTVDVSARLFAGPEEERMLEGIAPGLELVKDYGWVTIIAKPLFWLLEKIHSYVGNWGWSIVLLTLLIKAVFFPLSAASYKSMARMKAITPRMQALRERFKGDPQKMNSALMELYKTEKVNPFGGCLPVVIQIPVFISLYWVLLSSVEMRGAPWILWIHDLSQQDPFFILPVLMAVSMFLQTKLNPTPPDPVQAKMMMFMPIAFSVMFFFFPAGLVLYYVVNNVLSIAQQYYITRMMGQAKTKAA.

Residues 3–23 (IKRTVLWVIFFMSAVMLFDNW) traverse the membrane as a helical segment. The interval 36–59 (SATPTRTVGSAAPGTTTPGTQPAD) is disordered. A compositionally biased stretch (low complexity) spans 42 to 59 (TVGSAAPGTTTPGTQPAD). Helical transmembrane passes span 364 to 384 (WGWS…PLSA), 430 to 450 (FGGC…YWVL), and 504 to 524 (MMFM…GLVL).

The protein belongs to the OXA1/ALB3/YidC family. Type 1 subfamily. In terms of assembly, interacts with the Sec translocase complex via SecD. Specifically interacts with transmembrane segments of nascent integral membrane proteins during membrane integration.

The protein localises to the cell inner membrane. Required for the insertion and/or proper folding and/or complex formation of integral membrane proteins into the membrane. Involved in integration of membrane proteins that insert both dependently and independently of the Sec translocase complex, as well as at least some lipoproteins. Aids folding of multispanning membrane proteins. This Paraburkholderia xenovorans (strain LB400) protein is Membrane protein insertase YidC.